A 336-amino-acid chain; its full sequence is Alpha-glucoside transport system permease protein AglF (336 aa).

8 helical membrane-spanning segments follow: residues 4–24 (LIAA…YFWS), 55–75 (PWLF…YPVV), 113–133 (FLWL…IAAL), 146–166 (LIFM…KFIY), 176–196 (IGLL…WITL), 202–222 (FFLM…ILSA), 258–278 (IAVV…IVLA), and 304–324 (FGRG…IMIW). Residues 109–325 (IFNNFLWLLV…ILVVPIMIWN (217 aa)) enclose the ABC transmembrane type-1 domain.

The protein belongs to the binding-protein-dependent transport system permease family. MalFG subfamily.

It is found in the cell inner membrane. Functionally, part of the binding-protein-dependent transport system for alpha-glucosides such as sucrose, maltose and trehalose. Probably responsible for the translocation of the substrate across the membrane. The chain is Alpha-glucoside transport system permease protein AglF (aglF) from Rhizobium meliloti (strain 1021) (Ensifer meliloti).